Here is a 512-residue protein sequence, read N- to C-terminus: mRNA export factor (512 aa).

Residues 1–15 (MATDIDMLIDLGLDL) show a composition bias toward low complexity. The segment at 1-243 (MATDIDMLID…APERKAPAAD (243 aa)) is disordered. Residues 5–17 (IDMLIDLGLDLSD) carry the Nuclear export signal motif. A phosphoserine; by host mark is found at Ser-16 and Ser-18. 2 stretches are compositionally biased toward acidic residues: residues 16–26 (SDSDLDEDPPE) and 35–51 (LESD…EDME). The segment at 104–112 (VWSRLGARR) is interaction with host ALYREF. The Nuclear localization signal signature appears at 110–138 (ARRPSCSPEQHGGKVARLQPPPTKAQPAR). Ser-114 carries the post-translational modification Phosphoserine; by host. Arg-138 is subject to Dimethylated arginine; by host. The RGG-box stretch occupies residues 138–152 (RGGRRGRRRGRGRGG). Basic residues predominate over residues 139–149 (GGRRGRRRGRG). Omega-N-methylarginine; by host is present on Arg-148. Residue Arg-150 is modified to Dimethylated arginine; by host. Pro residues predominate over residues 214 to 233 (APPPLMTLAIAPPPADPRAP). Zn(2+) is bound by residues Cys-400, His-479, Cys-483, and Cys-488. A CHC2-type zinc finger spans residues 400–488 (CYLKARGLCG…HRQECSSRVC (89 aa)). Residues 500–512 (YVHGKYFYCNSLF) are important for homodimerization.

This sequence belongs to the HHV-1 ICP27 protein family. Homodimer. Interacts with host RBP1; this interaction facilitates the RNA polymerase recruitment to viral transcription sites. Interacts (via the RGG box) with host ALYREF/THOC4; this interaction recruits ALYREF to viral replication compartments and probably directs viral mRNA to the TAP/NFX1 pathway. Interacts with host ALYREF2. Interacts (via the RGG box) with host SRPK1; this interaction relocalizes SRPK1 to the nucleus and seems to alter its activity. Interacts with ICP4; this interaction modulates ICP4 DNA-binding activity. Interacts with host NXF1; this interaction allows efficient export of HHV-1 early and late transcripts. Methylated within the RGG box possibly by host PRMT1. When hypomethylated, ICP27 is exported to the cytoplasm earlier and more rapidly. In terms of processing, phosphorylated.

The protein localises to the host cytoplasm. It localises to the host nucleus. Multifunctional regulator of the expression of viral genes that contributes to the shutoff of host protein synthesis and mediates nuclear export of viral intronless mRNAs. Early in infection, this immediate early (EI) protein mediates the inhibition of cellular splicing. This results in the accumulation of unprocessed 3'end pre-mRNAs which can't be exported from the nucleus. Cellular protein synthesis is thereby shut off early after virus infection. Later in the infection, it helps recruit cellular RNA polymerase II to viral replication sites and promotes the nuclear export of viral intronless mRNAs by interacting with mRNAs and host NXF1/TAP. ICP27 binds to NUP62 which may provide facilitated viral mRNA export and may indirectly compete with some host cell transport receptors for binding and inhibit cellular nucleocytoplasmic transport pathways. Also stimulates translation of viral transcripts. Repression of host gene expression blocks the cell cycle at the G1 phase and prevents apoptosis. Seems to silence the 3' splice site of the promyelocytic leukemia (PML) intron 7a, thereby switching PML isoforms from PML-II to PML-V. This could be linked to the accelerated mRNA export induced by ICP27 which might not provide sufficient time for PML pre-mRNA to be spliced in the nucleus. This is mRNA export factor from Homo sapiens (Human).